Consider the following 882-residue polypeptide: MAAAGGERQLDGQKPGPPHLQQPGDRPAVPGRAEAFLNFTSMHGVQPILKRIRELSQQQLDGAQVPHLQWFRDVAALESPAGLPLREFPFAVYLITGNAGSGKSTCVQTINEVLDCVVTGATRIAAQNMYAKLSGAFLSRPINTIFHEFGFRGNHVQAQLGQYPYTLTSNPASLEDLQRRDLTYYWEVILDLTKRALAASGGEELRNEFRALAALERTLGLAEGALTRLAPATHGALPAFTRSNVIVIDEAGLLGRHLLTAVVYCWWMINALYHTPQYAARLRPVLVCVGSPTQTASLESTFEHQKLRCSVRQSENVLTYLICNRTLREYARLSYSWAIFINNKRCVEHEFGNLMKVLEYGLPITEEHMQFVDRFVVPENYITNPANLPGWTRLFSSHKEVSAYMAKLHAYLKVTREGEFVVFTLPVLTFVSVKEFDEYRRLTHQPGLTIEKWLTANASRITNYSQSQDQDAGHMRCEVHSKQQLVVARNDVTYVLNSQIAVTARLRKLVFGFSGTFRAFEAVLRDDSFVKTQGETSVEFAYRFLSRLIFSGLISFYNFLQRPGLDATQRTLAYARMGELTAEILSLRPKSSGVPTQASVMADAGAPGERAFDFKQLGPRDGGPDDFPDDDLDVIFAGLDEQQLDVFYCHYTPGEPETTAAVHTQFALLKRAFLGRFRILQELFGEAFEVAPFSTYVDNVIFRGCEMLTGSPRGGLMSVALQTDNYTLMGYTYARVFAFADELRRRHATANVAELLEEAPLPYVVLRDQHGFMSVVNTNISEFVESIDSTELAMAINADYGISSKLAMTITRSQGLSLDKVAICFTPGNLRLNSAYVAMSRTTSSEFLRMNLNPLRERHERDDVISEHILSALRDPNVVIVY.

The disordered stretch occupies residues Met1–Val29. An ATP-binding site is contributed by Gly97–Ser104.

It belongs to the herpesviridae helicase family. In terms of assembly, associates with the primase and the primase-associated factor to form the helicase-primase complex.

Its subcellular location is the host nucleus. Its function is as follows. Component of the helicase/primase complex. Unwinds the DNA at the replication forks and generates single-stranded DNA for both leading and lagging strand synthesis. The primase synthesizes short RNA primers on the lagging strand that the polymerase elongates using dNTPs. Possesses helicase-like motifs and therefore may act as the helicase subunit of the complex. The protein is DNA replication helicase of Homo sapiens (Human).